The sequence spans 587 residues: Proteasome-associated ATPase (587 aa).

Residues 1–94 adopt a coiled-coil conformation; it reads MAARDDAEAR…KEEVDRLAQP (94 aa). 276-281 lines the ATP pocket; the sequence is GCGKTL. Positions 586–587 are docks into pockets in the proteasome alpha-ring; that stretch reads YL.

This sequence belongs to the AAA ATPase family. As to quaternary structure, homohexamer. Assembles into a hexameric ring structure that caps the 20S proteasome core. Strongly interacts with the prokaryotic ubiquitin-like protein Pup through a hydrophobic interface; the interacting region of ARC lies in its N-terminal coiled-coil domain. There is one Pup binding site per ARC hexamer ring. Upon ATP-binding, the C-terminus of ARC interacts with the alpha-rings of the proteasome core, possibly by binding to the intersubunit pockets.

It functions in the pathway protein degradation; proteasomal Pup-dependent pathway. ATPase which is responsible for recognizing, binding, unfolding and translocation of pupylated proteins into the bacterial 20S proteasome core particle. May be essential for opening the gate of the 20S proteasome via an interaction with its C-terminus, thereby allowing substrate entry and access to the site of proteolysis. Thus, the C-termini of the proteasomal ATPase may function like a 'key in a lock' to induce gate opening and therefore regulate proteolysis. The polypeptide is Proteasome-associated ATPase (Streptosporangium roseum (strain ATCC 12428 / DSM 43021 / JCM 3005 / KCTC 9067 / NCIMB 10171 / NRRL 2505 / NI 9100)).